Consider the following 92-residue polypeptide: C-C motif chemokine 3 (92 aa).

An N-terminal signal peptide occupies residues 1–23 (MKVSTTALAVLLCTMTLCNQVFS). Cystine bridges form between C34-C57 and C35-C73.

The protein belongs to the intercrine beta (chemokine CC) family. As to quaternary structure, self-associates. Also heterodimer of MIP-1-alpha(4-69) and MIP-1-beta(3-69). Interacts with CCR1. Expressed in lung, spleen, and pancreas.

The protein localises to the secreted. In terms of biological role, monokine with inflammatory and chemokinetic properties. Binds to CCR1, CCR4 and CCR5. One of the major HIV-suppressive factors produced by CD8+ T-cells. Recombinant MIP-1-alpha induces a dose-dependent inhibition of different strains of HIV-1, HIV-2, and simian immunodeficiency virus (SIV). The chain is C-C motif chemokine 3 (Ccl3) from Mus musculus (Mouse).